Here is a 223-residue protein sequence, read N- to C-terminus: Thiamine-phosphate synthase (223 aa).

Residues 37–41 (QFREK) and aspartate 72 contribute to the 4-amino-2-methyl-5-(diphosphooxymethyl)pyrimidine site. Mg(2+) is bound by residues aspartate 73 and aspartate 92. Serine 110 is a binding site for 4-amino-2-methyl-5-(diphosphooxymethyl)pyrimidine. 2-[(2R,5Z)-2-carboxy-4-methylthiazol-5(2H)-ylidene]ethyl phosphate is bound at residue 136-138 (TQS). Lysine 139 lines the 4-amino-2-methyl-5-(diphosphooxymethyl)pyrimidine pocket. 2-[(2R,5Z)-2-carboxy-4-methylthiazol-5(2H)-ylidene]ethyl phosphate is bound by residues glycine 168 and 188 to 189 (IS).

It belongs to the thiamine-phosphate synthase family. Mg(2+) serves as cofactor.

The catalysed reaction is 2-[(2R,5Z)-2-carboxy-4-methylthiazol-5(2H)-ylidene]ethyl phosphate + 4-amino-2-methyl-5-(diphosphooxymethyl)pyrimidine + 2 H(+) = thiamine phosphate + CO2 + diphosphate. It carries out the reaction 2-(2-carboxy-4-methylthiazol-5-yl)ethyl phosphate + 4-amino-2-methyl-5-(diphosphooxymethyl)pyrimidine + 2 H(+) = thiamine phosphate + CO2 + diphosphate. It catalyses the reaction 4-methyl-5-(2-phosphooxyethyl)-thiazole + 4-amino-2-methyl-5-(diphosphooxymethyl)pyrimidine + H(+) = thiamine phosphate + diphosphate. It functions in the pathway cofactor biosynthesis; thiamine diphosphate biosynthesis; thiamine phosphate from 4-amino-2-methyl-5-diphosphomethylpyrimidine and 4-methyl-5-(2-phosphoethyl)-thiazole: step 1/1. Condenses 4-methyl-5-(beta-hydroxyethyl)thiazole monophosphate (THZ-P) and 2-methyl-4-amino-5-hydroxymethyl pyrimidine pyrophosphate (HMP-PP) to form thiamine monophosphate (TMP). The polypeptide is Thiamine-phosphate synthase (Streptococcus agalactiae serotype III (strain NEM316)).